We begin with the raw amino-acid sequence, 693 residues long: FAST kinase domain-containing protein 2, mitochondrial (693 aa).

Phosphoserine occurs at positions 110 and 124. The RAP domain occupies 618–675 (VAVLCVSRSAYCLGSSHPRGFLAMKMRHLNAMGFRVILVNNWEMDKLEMEDAVTFLKT). Ser692 carries the post-translational modification Phosphoserine.

This sequence belongs to the FAST kinase family. Monomer. Found in a complex with GRSF1, DDX28, DHX30 and FASTKD5. Associates with the 16S mitochondrial rRNA (16S mt-rRNA). Forms a regulatory protein-RNA complex, consisting of RCC1L, NGRN, RPUSD3, RPUSD4, TRUB2, FASTKD2 and 16S mt-rRNA.

It localises to the mitochondrion matrix. Its subcellular location is the mitochondrion nucleoid. Functionally, plays an important role in assembly of the mitochondrial large ribosomal subunit. As a component of a functional protein-RNA module, consisting of RCC1L, NGRN, RPUSD3, RPUSD4, TRUB2, FASTKD2 and 16S mitochondrial ribosomal RNA (16S mt-rRNA), controls 16S mt-rRNA abundance and is required for intra-mitochondrial translation. May play a role in mitochondrial apoptosis. This Pongo abelii (Sumatran orangutan) protein is FAST kinase domain-containing protein 2, mitochondrial (FASTKD2).